The sequence spans 291 residues: D-alanyl-D-alanine carboxypeptidase DacB2 (291 aa).

The N-terminal stretch at 1–22 (MRKLMTATAALCACAVTVSAGA) is a signal peptide. The Acyl-ester intermediate role is filled by Ser-69. The active-site Proton acceptor is Lys-72. Residue Ser-124 is part of the active site.

This sequence belongs to the peptidase S11 family.

The protein resides in the periplasm. It functions in the pathway cell wall biogenesis; peptidoglycan biosynthesis. With respect to regulation, inhibited by the beta-lactam antibiotic meropenem. Inhibited by the non-specific inhibitor phenylmethylsulfonyl fluoride (PMSF). In terms of biological role, probably cleaves the terminal D-Ala-D-Ala dipeptide of the peptidoglycan stem peptide. Shows significant D,D-carboxypeptidase activity in vitro. Acts on the synthetic penta-peptide substrate Penta-DAP (L-Ala-gamma-D-Gln-DAP-D-Ala-D-Ala). Also shows weak activity on Penta-Lys (L-Ala-gamma-Glu-L-Lys-D-Ala-D-Ala). The catalytic domain binds weakly to peptidoglycan in vitro. Plays an important role in the maintenance of colony morphology and cell wall permeability and integrity. The chain is D-alanyl-D-alanine carboxypeptidase DacB2 from Mycobacterium tuberculosis (strain ATCC 25618 / H37Rv).